Reading from the N-terminus, the 301-residue chain is Ornithine carbamoyltransferase (301 aa).

Carbamoyl phosphate is bound by residues Arg100 and 127 to 130 (HPCQ). L-ornithine is bound by residues Asn158, Asp221, and 225–226 (SM). Positions 260 and 288 each coordinate carbamoyl phosphate.

The protein belongs to the aspartate/ornithine carbamoyltransferase superfamily. OTCase family. The enzyme is present as a mixture of trimers and dodecamers, with the relative proportions of the two forms depending on the salt concentration. In addition, the trimeric fraction could reassociate into dodecamers when the salt concentration is increased. It appears that in vivo, the main fraction is in the dodecameric form.

It localises to the cytoplasm. It catalyses the reaction carbamoyl phosphate + L-ornithine = L-citrulline + phosphate + H(+). It participates in amino-acid biosynthesis; L-arginine biosynthesis; L-arginine from L-ornithine and carbamoyl phosphate: step 1/3. With respect to regulation, inhibited by excess of arginine and by the bisubstrate delta-N-phosphonoacetyl-L-ornithine (PALO). Reversibly catalyzes the transfer of the carbamoyl group from carbamoyl phosphate (CP) to the N(epsilon) atom of ornithine (ORN) to produce L-citrulline, which is a substrate for argininosuccinate synthetase, the enzyme involved in the final step in arginine biosynthesis. The polypeptide is Ornithine carbamoyltransferase (Moritella abyssi).